Here is a 226-residue protein sequence, read N- to C-terminus: Glutathione S-transferase kappa 1 (226 aa).

16-18 (SPY) contacts glutathione. Residue lysine 49 is modified to N6-succinyllysine. Asparagine 53 contacts glutathione. N6-acetyllysine is present on residues lysine 71 and lysine 85. Lysine 116 carries the post-translational modification N6-acetyllysine; alternate. Position 116 is an N6-succinyllysine; alternate (lysine 116). An N6-succinyllysine modification is found at lysine 144. Lysine 158 is subject to N6-acetyllysine; alternate. Lysine 158 bears the N6-succinyllysine; alternate mark. N6-acetyllysine is present on residues lysine 165 and lysine 169. Glutathione is bound by residues leucine 183 and 200 to 201 (SD).

The protein belongs to the GST superfamily. Kappa family. In terms of assembly, homodimer. Ubiquitous.

The protein resides in the peroxisome. It carries out the reaction RX + glutathione = an S-substituted glutathione + a halide anion + H(+). In terms of biological role, glutathione S-transferase that catalyzes the conjugation of glutathione to exogenous and endogenous compounds. Significant glutathione conjugating activity is found only with the model substrate, 1-chloro-2,4-dinitrobenzene (CDNB). The sequence is that of Glutathione S-transferase kappa 1 (GSTK1) from Homo sapiens (Human).